Consider the following 282-residue polypeptide: Shikimate dehydrogenase (NADP(+)) (282 aa).

Residues Ser-19–Ser-21 and Thr-66 contribute to the shikimate site. Catalysis depends on Lys-70, which acts as the Proton acceptor. Shikimate is bound by residues Asn-91 and Asp-106. NADP(+) is bound by residues Gly-130–Ala-134, Asn-152–Lys-157, Thr-196, Met-200, and Leu-224. Tyr-226 is a binding site for shikimate. Position 247 (Gly-247) interacts with NADP(+).

Belongs to the shikimate dehydrogenase family. Homodimer.

The catalysed reaction is shikimate + NADP(+) = 3-dehydroshikimate + NADPH + H(+). It functions in the pathway metabolic intermediate biosynthesis; chorismate biosynthesis; chorismate from D-erythrose 4-phosphate and phosphoenolpyruvate: step 4/7. In terms of biological role, involved in the biosynthesis of the chorismate, which leads to the biosynthesis of aromatic amino acids. Catalyzes the reversible NADPH linked reduction of 3-dehydroshikimate (DHSA) to yield shikimate (SA). This is Shikimate dehydrogenase (NADP(+)) from Methanocaldococcus jannaschii (strain ATCC 43067 / DSM 2661 / JAL-1 / JCM 10045 / NBRC 100440) (Methanococcus jannaschii).